The following is a 503-amino-acid chain: Variant surface glycoprotein AnTaT 1.1 (503 aa).

An N-terminal signal peptide occupies residues 1–29 (MVTKERNAALKIVMLVASALTLHPQQALA). 2 cysteine pairs are disulfide-bonded: C45–C172 and C154–C209. N113 is a glycosylation site (N-linked (GlcNAc...) asparagine). N-linked (GlcNAc...) asparagine glycosylation is found at N419 and N432. D480 carries GPI-anchor amidated aspartate lipidation. Positions 481–503 (SSILLTKNFALSVVSAALVALLF) are cleaved as a propeptide — removed in mature form.

It localises to the cell membrane. Its function is as follows. VSG forms a coat on the surface of the parasite. The trypanosome evades the immune response of the host by expressing a series of antigenically distinct VSGs from an estimated 1000 VSG genes. The polypeptide is Variant surface glycoprotein AnTaT 1.1 (Trypanosoma brucei brucei).